The chain runs to 122 residues: Large ribosomal subunit protein uL14c (122 aa).

The protein belongs to the universal ribosomal protein uL14 family. In terms of assembly, part of the 50S ribosomal subunit.

It is found in the plastid. The protein resides in the chloroplast. Functionally, binds to 23S rRNA. This chain is Large ribosomal subunit protein uL14c, found in Chaetosphaeridium globosum (Charophycean green alga).